The following is a 476-amino-acid chain: Protein transport protein Sec61 subunit alpha (476 aa).

The Cytoplasmic segment spans residues 2–33; the sequence is GIKFLEFIKPFCAVLPEIQKPERKIQFREKVL. The chain crosses the membrane as a helical span at residues 34–53; it reads WTAITLFIFLVCCQIPLFGI. Residues 54-76 lie on the Lumenal side of the membrane; the sequence is MSSDSADPFYWMRVILASNRGTL. The chain crosses the membrane as a helical span at residues 77 to 96; sequence MELGIAPIVTSGLIMQLLAG. Topologically, residues 97 to 117 are cytoplasmic; that stretch reads AKIIEVGDTPKDRALFNGAQK. A helical transmembrane segment spans residues 118–138; it reads LFGMIITIGQAIVYVMTGMYG. Residues 139–144 lie on the Lumenal side of the membrane; it reads DPSEMG. The chain crosses the membrane as a helical span at residues 145-165; it reads AGICLLIIIQLFVAGLIVLLL. Residues 166 to 172 lie on the Cytoplasmic side of the membrane; sequence DELLQKG. The chain crosses the membrane as a helical span at residues 173–193; sequence YGLGSGISLFIATNICETIVW. The Lumenal segment spans residues 194-240; the sequence is KAFGPTTVNTGRGTEFEGAIIALFHLLATRTDKVRALREAFYRQNLP. A helical transmembrane segment spans residues 241-261; it reads NLMNLIATVFVFAVVIYFQGF. Topologically, residues 262-288 are cytoplasmic; that stretch reads RVDLPIKSARYRGQYNTYPIKLFYTSN. A helical membrane pass occupies residues 289-309; the sequence is IPIILQSALVSNLYVISQMLS. Residues 310-354 are Lumenal-facing; that stretch reads TRFSGNFLVNLLGTWSDATTSGPARAYPVAGLCYYLSPPESFGSV. A helical membrane pass occupies residues 355-375; that stretch reads LDDPVHAVIYIVFMLGSCAFF. The Cytoplasmic portion of the chain corresponds to 376-420; it reads SKTWIEVSGSSAKDVAKQLKEQQMVMRGHRETSMVHELNRYIPTA. A helical transmembrane segment spans residues 421-441; it reads AAFGGLCIGGLSVMADFLGAI. The Lumenal segment spans residues 442–445; it reads GSGT. The chain crosses the membrane as a helical span at residues 446-462; that stretch reads GILLAVTIIYQYFEIFV. Over 463-476 the chain is Cytoplasmic; that stretch reads KEQSEVGSMGALLF.

Belongs to the SecY/SEC61-alpha family. In terms of assembly, the SEC61 channel-forming translocon complex consists of channel-forming core components SEC61A1, SEC61B and SEC61G and different auxiliary components such as SEC62 and SEC63. The SEC61 channel associates with the multi-pass translocon (MPT) complex.

The protein localises to the endoplasmic reticulum membrane. Functionally, component of SEC61 channel-forming translocon complex that mediates transport of signal peptide-containing precursor polypeptides across the endoplasmic reticulum (ER). Forms a ribosome receptor and a gated pore in the ER membrane, both functions required for cotranslational translocation of nascent polypeptides. May cooperate with auxiliary protein SEC62, SEC63 and HSPA5/BiP to enable post-translational transport of small presecretory proteins. The SEC61 channel is also involved in ER membrane insertion of transmembrane proteins: it mediates membrane insertion of the first few transmembrane segments of proteins, while insertion of subsequent transmembrane regions of multi-pass membrane proteins is mediated by the multi-pass translocon (MPT) complex. The polypeptide is Protein transport protein Sec61 subunit alpha (sec61a) (Bovichtus variegatus (Thornfish)).